The chain runs to 522 residues: Peptide methionine sulfoxide reductase MsrA/MsrB (522 aa).

Residues 17-174 (LALGACSPKI…ALALIRDPNA (158 aa)) form the Thioredoxin domain. Cysteines 68 and 71 form a disulfide. The interval 199–354 (RTIYLAGGCF…PNGYCHIDIR (156 aa)) is peptide methionine sulfoxide reductase A. The active site involves C207. Residues 383-506 (DAELKRTLTE…NGASLKFIPL (124 aa)) enclose the MsrB domain. A disulfide bond links C440 and C495. The active-site Nucleophile is the C495.

In the N-terminal section; belongs to the thioredoxin family. This sequence in the central section; belongs to the MsrA Met sulfoxide reductase family. It in the C-terminal section; belongs to the MsrB Met sulfoxide reductase family.

It carries out the reaction L-methionyl-[protein] + [thioredoxin]-disulfide + H2O = L-methionyl-(S)-S-oxide-[protein] + [thioredoxin]-dithiol. It catalyses the reaction [thioredoxin]-disulfide + L-methionine + H2O = L-methionine (S)-S-oxide + [thioredoxin]-dithiol. The enzyme catalyses L-methionyl-[protein] + [thioredoxin]-disulfide + H2O = L-methionyl-(R)-S-oxide-[protein] + [thioredoxin]-dithiol. In terms of biological role, has an important function as a repair enzyme for proteins that have been inactivated by oxidation. Catalyzes the reversible oxidation-reduction of methionine sulfoxide in proteins to methionine. The sequence is that of Peptide methionine sulfoxide reductase MsrA/MsrB (msrAB) from Neisseria meningitidis serogroup B (strain ATCC BAA-335 / MC58).